Here is a 148-residue protein sequence, read N- to C-terminus: Thioredoxin H8 (148 aa).

The region spanning 1 to 145 (MGANVSTPDQ…LERKLNKYTQ (145 aa)) is the Thioredoxin domain. Active-site nucleophile residues include Cys71 and Cys74. Cys71 and Cys74 form a disulfide bridge.

The protein belongs to the thioredoxin family. Plant H-type subfamily.

Its subcellular location is the cytoplasm. Functionally, probable thiol-disulfide oxidoreductase that may be involved in the redox regulation of a number of cytosolic enzymes. The protein is Thioredoxin H8 (TRX8) of Arabidopsis thaliana (Mouse-ear cress).